A 438-amino-acid chain; its full sequence is MYIIADWRRTHYSEQVIPEMDGQEVILMGWVHSIRALGKLAFIILRDREGLIQMVVPKQKVDEETFELAKKLGKEDVITIRGKVVANEKAPKGFEVIPMEIRILNKADAPLPLDPSEKVPAEIDTRLDRRFLDIRRPKIQAIFKIRSEMLKSIRKTFSEEGFIEVNTPKLVASATEGGTELFPISYFEKEAFLGQSPQLYKQMMMAGGFDKVFEIAQIFRAEEHNTRRHLNEAISIDTEMSFVNEKDAMAMLEKVVHNCYTDIEYNRPSEIETLELNFEIPEKTFPKVTYSEAVDVAVSKGVEIEWGEDLSRAAEKAIGDEMGGLYFITEWPTQTRPFYTLPDENDNKICKAFDLMYKELEISSGAQRIHKYDSLVQNIAKRGMNPDSFETYLEAFRYGMPPHAGWGLGADRFTMILTNQENIRECVLFPRDRQRLTP.

L-aspartate is bound at residue Glu-176. An aspartate region spans residues 198–201 (QLYK). Arg-220 is a binding site for L-aspartate. ATP is bound by residues 220–222 (RAE), 228–230 (RHL), and Glu-361. The Mg(2+) site is built by Glu-361 and Ser-364. L-aspartate-binding residues include Ser-364 and Arg-368. Residue 409–412 (GADR) coordinates ATP.

This sequence belongs to the class-II aminoacyl-tRNA synthetase family. Type 2 subfamily. Homodimer. Mg(2+) is required as a cofactor.

Its subcellular location is the cytoplasm. The enzyme catalyses tRNA(Asx) + L-aspartate + ATP = L-aspartyl-tRNA(Asx) + AMP + diphosphate. Aspartyl-tRNA synthetase with relaxed tRNA specificity since it is able to aspartylate not only its cognate tRNA(Asp) but also tRNA(Asn). Reaction proceeds in two steps: L-aspartate is first activated by ATP to form Asp-AMP and then transferred to the acceptor end of tRNA(Asp/Asn). This is Aspartate--tRNA(Asp/Asn) ligase from Methanococcus vannielii (strain ATCC 35089 / DSM 1224 / JCM 13029 / OCM 148 / SB).